Reading from the N-terminus, the 367-residue chain is Embryonic developmental protein tofu-6 (367 aa).

One can recognise an RRM domain in the interval Ala-13 to Asn-92. The segment at Lys-298–Ala-345 is required for ife-3 interaction.

As to quaternary structure, component of the pid-1 variant of the PETISCO complex (also called the pid-3, erh-2, tofu-6, and ife-3 small RNA complex) containing at least pid-1, tofu-6, ife-3, pid-3, and erh-2, which is required for the biogenesis of 21 nucleotide PIWI-interacting RNAs (piRNAs) that possess a uracil residue at the 5'-end (also called 21U-RNAs). Within the pid-1 variant of the PETISCO complex interacts with pid-1. Component of the tost-1 variant of the PETISCO complex (also called the pid-3, erh-2, tofu-6, and ife-3 small RNA complex) containing at least tost-1, tofu-6, ife-3, pid-3, and erh-2, which plays an essential role in embryogenesis. Within the tost-1 variant of the PETISCO complex interacts with tost-1. Within the pid-1 and tost-1 variants of the PETISCO complexes interacts (via C-terminus) with ife-3. Within the pid-1 and tost-1 variants of the PETISCO complexes interacts (via the RRM domain) with pid-3. Within the pid-1 and tost-1 variants of the PETISCO complexes interacts (via the RRM domain) with erh-2. In contrast to the pid-1 variant of the PETISCO complex, the tost-1 variant of the PETISCO complex plays a minor role in the biogenesis of 21U-RNAs. Interacts (via residues 120-314) with the PUCH complex subunit tofu-1 (via residues 82-172); the interaction between the PETISCO and PUCH complex members enhances piRNA production in vivo. In terms of tissue distribution, expression is restricted to the germline (at protein level).

It is found in the cytoplasm. The protein localises to the perinuclear region. The protein resides in the nucleus. Functionally, component of the pid-1 and tost-1 variants of the PETISCO complexes, which have roles in the biogenesis of a class of 21 nucleotide PIWI-interacting RNAs (piRNAs) that possess a uracil residue at the 5'-end (also called 21U-RNAs) and embryogenesis, respectively. Promotes the biogenesis of 21U-RNAs. Mediates the interaction between the PETISCO complex and the PUCH complex, the endoribonuclease complex processing the 5'-end of precursor piRNAs, thereby enhancing mature piRNA production. Required for chromosome segregation and cell division in early embryos. May have a role in DNA replication. The sequence is that of Embryonic developmental protein tofu-6 from Caenorhabditis elegans.